The sequence spans 101 residues: Signal recognition particle 19 kDa protein (101 aa).

Belongs to the SRP19 family. Part of the signal recognition particle protein translocation system, which is composed of SRP and FtsY. Archaeal SRP consists of a 7S RNA molecule of 300 nucleotides and two protein subunits: SRP54 and SRP19.

The protein localises to the cytoplasm. In terms of biological role, involved in targeting and insertion of nascent membrane proteins into the cytoplasmic membrane. Binds directly to 7S RNA and mediates binding of the 54 kDa subunit of the SRP. This Methanosarcina acetivorans (strain ATCC 35395 / DSM 2834 / JCM 12185 / C2A) protein is Signal recognition particle 19 kDa protein.